The following is a 701-amino-acid chain: Polyribonucleotide nucleotidyltransferase (701 aa).

Mg(2+) contacts are provided by D487 and D493. Positions 554 to 613 (PTMIAMKIDTDKIRDVIGKGGATIRAICEETKASIDIEDDGSIKIFGETKEAADAAKQRI) constitute a KH domain. In terms of domain architecture, S1 motif spans 623–691 (GKIYVGKVER…NRGRIKLSIK (69 aa)).

This sequence belongs to the polyribonucleotide nucleotidyltransferase family. As to quaternary structure, component of the RNA degradosome, which is a multiprotein complex involved in RNA processing and mRNA degradation. Requires Mg(2+) as cofactor.

It localises to the cytoplasm. The catalysed reaction is RNA(n+1) + phosphate = RNA(n) + a ribonucleoside 5'-diphosphate. In terms of biological role, involved in mRNA degradation. Catalyzes the phosphorolysis of single-stranded polyribonucleotides processively in the 3'- to 5'-direction. This is Polyribonucleotide nucleotidyltransferase from Pseudomonas putida (strain ATCC 47054 / DSM 6125 / CFBP 8728 / NCIMB 11950 / KT2440).